The chain runs to 217 residues: UPF0193 protein EVG1 (217 aa).

It belongs to the UPF0193 (EVG1) family.

This Homo sapiens (Human) protein is UPF0193 protein EVG1 (C22orf23).